The chain runs to 55 residues: MKIFFAVLVILVLFSMLIWTAYGTPYPVNCKTDRDCVMCGLGISCKNGYCQSCTR.

An N-terminal signal peptide occupies residues 1–23 (MKIFFAVLVILVLFSMLIWTAYG). 3 cysteine pairs are disulfide-bonded: C30/C45, C36/C50, and C39/C53.

As to expression, expressed by the venom gland.

It localises to the secreted. The protein is Neurotoxin X-29S of Olivierus martensii (Manchurian scorpion).